Consider the following 96-residue polypeptide: Co-chaperonin GroES 1 (96 aa).

This sequence belongs to the GroES chaperonin family. Heptamer of 7 subunits arranged in a ring. Interacts with the chaperonin GroEL.

It is found in the cytoplasm. Together with the chaperonin GroEL, plays an essential role in assisting protein folding. The GroEL-GroES system forms a nano-cage that allows encapsulation of the non-native substrate proteins and provides a physical environment optimized to promote and accelerate protein folding. GroES binds to the apical surface of the GroEL ring, thereby capping the opening of the GroEL channel. The chain is Co-chaperonin GroES 1 from Vibrio vulnificus (strain CMCP6).